A 715-amino-acid chain; its full sequence is Elongation factor G (715 aa).

A tr-type G domain is found at 8–290; that stretch reads NRYRNIGICA…AVIDFLPAPT (283 aa). Residues 17–24, 88–92, and 142–145 each bind GTP; these read AHVDAGKT, DTPGH, and NKMD.

This sequence belongs to the TRAFAC class translation factor GTPase superfamily. Classic translation factor GTPase family. EF-G/EF-2 subfamily.

It is found in the cytoplasm. Functionally, catalyzes the GTP-dependent ribosomal translocation step during translation elongation. During this step, the ribosome changes from the pre-translocational (PRE) to the post-translocational (POST) state as the newly formed A-site-bound peptidyl-tRNA and P-site-bound deacylated tRNA move to the P and E sites, respectively. Catalyzes the coordinated movement of the two tRNA molecules, the mRNA and conformational changes in the ribosome. The polypeptide is Elongation factor G (Ectopseudomonas mendocina (strain ymp) (Pseudomonas mendocina)).